The following is a 1029-amino-acid chain: 2-oxoglutarate dehydrogenase, mitochondrial (1029 aa).

Thiamine diphosphate-binding residues include R317, D415, N448, I450, and Q676. Residues D415, N448, and I450 each contribute to the Mg(2+) site.

This sequence belongs to the alpha-ketoglutarate dehydrogenase family. In terms of assembly, homodimer. Component of the 2-oxoglutarate dehydrogenase complex. It depends on thiamine diphosphate as a cofactor. Mg(2+) serves as cofactor.

The protein localises to the mitochondrion matrix. It carries out the reaction N(6)-[(R)-lipoyl]-L-lysyl-[protein] + 2-oxoglutarate + H(+) = N(6)-[(R)-S(8)-succinyldihydrolipoyl]-L-lysyl-[protein] + CO2. The 2-oxoglutarate dehydrogenase complex catalyzes the overall conversion of 2-oxoglutarate to succinyl-CoA and CO(2). It contains multiple copies of three enzymatic components: 2-oxoglutarate dehydrogenase (E1), dihydrolipoamide succinyltransferase (E2) and lipoamide dehydrogenase (E3). This Caenorhabditis elegans protein is 2-oxoglutarate dehydrogenase, mitochondrial (ogdh-1).